We begin with the raw amino-acid sequence, 232 residues long: Ion-translocating oxidoreductase complex subunit E (232 aa).

A run of 5 helical transmembrane segments spans residues 39-59 (LGLG…ISLV), 69-89 (IPVF…LVNA), 93-113 (GLYM…IIIG), 128-148 (AFDG…LGAT), and 182-202 (SFLL…LIAL).

Belongs to the NqrDE/RnfAE family. In terms of assembly, the complex is composed of six subunits: RnfA, RnfB, RnfC, RnfD, RnfE and RnfG.

It localises to the cell inner membrane. In terms of biological role, part of a membrane-bound complex that couples electron transfer with translocation of ions across the membrane. This Shewanella oneidensis (strain ATCC 700550 / JCM 31522 / CIP 106686 / LMG 19005 / NCIMB 14063 / MR-1) protein is Ion-translocating oxidoreductase complex subunit E.